The chain runs to 126 residues: Nitrogenase-stabilizing/protective protein NifW (126 aa).

Positions valine 104 to arginine 126 are disordered.

This sequence belongs to the NifW family. In terms of assembly, homotrimer; associates with NifD.

Its function is as follows. May protect the nitrogenase Fe-Mo protein from oxidative damage. The sequence is that of Nitrogenase-stabilizing/protective protein NifW from Parafrankia sp. (strain EAN1pec).